A 99-amino-acid chain; its full sequence is NADH-quinone oxidoreductase subunit K (99 aa).

Helical transmembrane passes span 3-23 (PANYLILSALLFTIGTVGVLV), 28-48 (IVVFMSVELMLNAVNLTLVTF), and 59-79 (IMAFFVMVVAAAEVVIGLAII).

It belongs to the complex I subunit 4L family. As to quaternary structure, NDH-1 is composed of 14 different subunits. Subunits NuoA, H, J, K, L, M, N constitute the membrane sector of the complex.

It localises to the cell membrane. The enzyme catalyses a quinone + NADH + 5 H(+)(in) = a quinol + NAD(+) + 4 H(+)(out). NDH-1 shuttles electrons from NADH, via FMN and iron-sulfur (Fe-S) centers, to quinones in the respiratory chain. The immediate electron acceptor for the enzyme in this species is believed to be a menaquinone. Couples the redox reaction to proton translocation (for every two electrons transferred, four hydrogen ions are translocated across the cytoplasmic membrane), and thus conserves the redox energy in a proton gradient. This chain is NADH-quinone oxidoreductase subunit K, found in Frankia casuarinae (strain DSM 45818 / CECT 9043 / HFP020203 / CcI3).